A 296-amino-acid chain; its full sequence is Sulfotransferase 1C2 (296 aa).

49–54 (KAGTTW) contacts 3'-phosphoadenylyl sulfate. 107-109 (KTH) serves as a coordination point for substrate. Histidine 109 functions as the Proton acceptor in the catalytic mechanism. 3'-phosphoadenylyl sulfate is bound by residues arginine 131, serine 139, tyrosine 194, and 228 to 233 (TSFEKM). Serine 139 is subject to Phosphoserine. The residue at position 254 (serine 254) is a Phosphoserine. Residue 256 to 260 (FMRKG) participates in 3'-phosphoadenylyl sulfate binding.

Belongs to the sulfotransferase 1 family. As to expression, found in adult stomach, kidney and thyroid gland, and in fetal kidney and liver.

It localises to the cytoplasm. It is found in the lysosome. Its subcellular location is the mitochondrion. It catalyses the reaction a phenol + 3'-phosphoadenylyl sulfate = an aryl sulfate + adenosine 3',5'-bisphosphate + H(+). The catalysed reaction is cholesterol + 3'-phosphoadenylyl sulfate = cholesterol sulfate + adenosine 3',5'-bisphosphate + H(+). In terms of biological role, sulfotransferase that utilizes 3'-phospho-5'-adenylyl sulfate (PAPS) to catalyze the sulfate conjugation of phenolic compounds. Does not transfer sulfate to steroids, dopamine, acetaminophen, or alpha-naphthol. Except in mitochondria, where it can add sulfate to cholesterol producing cholesterol sulfate, which alters mitochondrial membrane organization, and impacts protein complex mobility increasing state-III respiration, thereby modulating mitochondrial respiration. Catalyzes the sulfation of the carcinogenic N-hydroxy-2-acetylaminofluorene leading to highly reactive intermediates capable of forming DNA adducts, potentially resulting in mutagenesis. The polypeptide is Sulfotransferase 1C2 (SULT1C2) (Homo sapiens (Human)).